Consider the following 360-residue polypeptide: Lipid-A-disaccharide synthase (360 aa).

Belongs to the LpxB family.

It catalyses the reaction a lipid X + a UDP-2-N,3-O-bis[(3R)-3-hydroxyacyl]-alpha-D-glucosamine = a lipid A disaccharide + UDP + H(+). It functions in the pathway bacterial outer membrane biogenesis; LPS lipid A biosynthesis. Condensation of UDP-2,3-diacylglucosamine and 2,3-diacylglucosamine-1-phosphate to form lipid A disaccharide, a precursor of lipid A, a phosphorylated glycolipid that anchors the lipopolysaccharide to the outer membrane of the cell. In Helicobacter pylori (strain G27), this protein is Lipid-A-disaccharide synthase.